The following is a 402-amino-acid chain: Chorismate synthase (402 aa).

Positions 40 and 46 each coordinate NADP(+). FMN contacts are provided by residues 134–136 (RAS), 255–256 (QA), glycine 299, 314–318 (KPIAT), and arginine 340.

Belongs to the chorismate synthase family. As to quaternary structure, homotetramer. Requires FMNH2 as cofactor.

The catalysed reaction is 5-O-(1-carboxyvinyl)-3-phosphoshikimate = chorismate + phosphate. It functions in the pathway metabolic intermediate biosynthesis; chorismate biosynthesis; chorismate from D-erythrose 4-phosphate and phosphoenolpyruvate: step 7/7. Catalyzes the anti-1,4-elimination of the C-3 phosphate and the C-6 proR hydrogen from 5-enolpyruvylshikimate-3-phosphate (EPSP) to yield chorismate, which is the branch point compound that serves as the starting substrate for the three terminal pathways of aromatic amino acid biosynthesis. This reaction introduces a second double bond into the aromatic ring system. This chain is Chorismate synthase, found in Leifsonia xyli subsp. xyli (strain CTCB07).